Reading from the N-terminus, the 383-residue chain is MAKHLFTSESVSEGHPDKIADQISDAVLDAILAQDPKARVACETYVKTGMVLVGGEVTTSAWVDIEEITRKTVREIGYTHSDMGFDADSCAVLNAIGKQSPDINQGVDRADPAEQGAGDQGLMFGYANNETDVLMPAPITYAHALVKRQSEVRKNGTLPWLRPDAKSQVTFAYDDGKIVGIDAVVLSTQHRDDVSQADLIEGVMETIIKPVLPAQWLNKDTKFFINPTGRFVIGGPVGDCGLTGRKIIVDTYGGMARHGGGAFSGKDPSKVDRSAAYAARYVAKNIVAAGLADRCEIQVSYAIGVAEPTSISIETFGTGKVSEDLLIKLVRQHFELRPYGLTAMLDLARPIYQATAAYGHFGRNEFPWEATDKAEILRADAGL.

Residue histidine 15 participates in ATP binding. Aspartate 17 is a binding site for Mg(2+). Glutamate 43 contacts K(+). 2 residues coordinate L-methionine: glutamate 56 and glutamine 99. Residues 99–109 (QSPDINQGVDR) are flexible loop. ATP contacts are provided by residues 164-166 (DAK), 230-231 (RF), aspartate 239, 245-246 (RK), alanine 262, and lysine 266. Aspartate 239 is a binding site for L-methionine. Lysine 270 is an L-methionine binding site.

It belongs to the AdoMet synthase family. Homotetramer; dimer of dimers. It depends on Mg(2+) as a cofactor. Requires K(+) as cofactor.

The protein resides in the cytoplasm. The enzyme catalyses L-methionine + ATP + H2O = S-adenosyl-L-methionine + phosphate + diphosphate. Its pathway is amino-acid biosynthesis; S-adenosyl-L-methionine biosynthesis; S-adenosyl-L-methionine from L-methionine: step 1/1. Functionally, catalyzes the formation of S-adenosylmethionine (AdoMet) from methionine and ATP. The overall synthetic reaction is composed of two sequential steps, AdoMet formation and the subsequent tripolyphosphate hydrolysis which occurs prior to release of AdoMet from the enzyme. The polypeptide is S-adenosylmethionine synthase (Shewanella baltica (strain OS155 / ATCC BAA-1091)).